Reading from the N-terminus, the 91-residue chain is Potassium channel toxin AaTXK-beta (91 aa).

The first 19 residues, 1–19, serve as a signal peptide directing secretion; that stretch reads MQRNLVVLLFLGMVALSSC. Residues 20–27 constitute a propeptide that is removed on maturation; sequence GLREKHVQ. Residues 54–91 enclose the BetaSPN-type CS-alpha/beta domain; that stretch reads QFGCPAYQGYCDDHCQDIKKEEGFCHGFKCKCGIPMGF. 3 disulfide bridges follow: cysteine 57–cysteine 78, cysteine 64–cysteine 83, and cysteine 68–cysteine 85.

This sequence belongs to the long chain scorpion toxin family. Class 1 subfamily. As to quaternary structure, monomer (both chains). As to expression, expressed by the venom gland.

Its subcellular location is the secreted. Inhibits voltage-gated potassium channels (Kv). Does not activate Kv7 channels. In terms of biological role, peptide activator of Kv7.4/KCNQ4 channels. Also acts as a subtype-selective activator of channels formed by Kv7.3/KCNQ3, Kv7.2/Kv7.3 (KCNQ2/KCNQ3), Kv7.5/Kv7.3 (KCNQ3/KCNQ5) subunits. The chain is Potassium channel toxin AaTXK-beta from Androctonus australis (Sahara scorpion).